Consider the following 119-residue polypeptide: Beta-2-microglobulin (119 aa).

Positions 1-20 (MARSVVVALLVLLSLSGLEA) are cleaved as a signal peptide. The Ig-like C1-type domain occupies 25–114 (PKIQVYSRHP…VTFSTPKTVK (90 aa)). A disulfide bond links Cys45 and Cys100.

Belongs to the beta-2-microglobulin family. Heterodimer of an alpha chain and a beta chain. Beta-2-microglobulin is the beta-chain of major histocompatibility complex class I molecules.

It is found in the secreted. In terms of biological role, component of the class I major histocompatibility complex (MHC). Involved in the presentation of peptide antigens to the immune system. The protein is Beta-2-microglobulin (B2M) of Ateles paniscus (Black spider monkey).